A 1188-amino-acid chain; its full sequence is MAGHDVQYGKHRTRRSFSRIKEVLDLPNLIEIQTDSFKDFLDHGLKEVFEDVLPISNFTDTMELEFVGYEIREPKYTLEEARIHDASYSAPIFVTFRLINKETGEIKTQEVFFGDFPIMTEMGTFIINGGERIIVSQLVRSPGVYFNDKVDKNGKIGYGSTVIPNRGAWLELETDSKDIAYTRIDRTRKIPFTTLVRALGFSGDDEIFDIFGDSDLVRNTIEKDIHKNPMDSRTDEALKEIYERLRPGEPKTAESSRSLLVARFFDPHRYDLAAVGRYKINKKLNIKTRLLNQTIAEPLVDAETGEILVEAGTLMTRSVIDSIAEQLDNGLNKITYIPNDSAVLTEPVELQKFKVVAPTDPDRVVTIIGNANPSDKVRTVTPADILAEMSYFLNLAEGIGRVDDIDHLGNRRIRAVGELLANQVRLGLSRMERNVRERMSVQDNEVLTPQQIINIRPVTAAIKEFFGSSQLSQFMDQHNPLSELSHKRRLSALGPGGLTRDRAGYEVRDVHYTHYGRMCPIETPEGPNIGLINNLSSYGHLNKYGFIQTPYRKVDREAGVVTNEIVWLTADEEDEFIVAQANSKLNEEGGFAEPIVMGRHQGNNQEFPSDQVDYMDVSPKQVVAVATACIPFLENDDSNRALMGANMQRQAVPLIDPKAPYVGTGMEYQAAHDSGAAVIAQHDGKVTYADADKVEVRREDGSLDVYHIQKFRRSNSGTAYNQRTLVKVGDVVEKGDFIADGPSMENGEMALGQNPIVAYMTWEGYNFEDAVIMSERLVKDDVYTSVHLEEYESETRDTKLGPEEITREIPNVGEDALRNLDEMGIIRIGAEVKEGDILVGKVTPKGEKDLSAEERLLHAIFGDKSREVRDTSLRVPHGADGVVRDVKIFTRANGDELQSGVNMLVRVYIAQKRKIKVGDKMAGRHGNKGVVSRIVPVEDMPYLPDGTPVDIMLNPLGVPSRMNIGQVMELHLGMAARNLGIHIATPVFDGASSDDLWDTVREAGMDSDAKTVLYDGRTGEPFDNRVSVGVMYMIKLHHMVDDKLHARSVGPYSMVTQQPLGGKAQFGGQRFGEMEVWALEAYGASNVLQEILTYKSDDVNGRLKAYEAITKGKPIPKPGVPESFRVLVKELQSLGLDMRVLDEDDNEVELRDLDEGEDDDVIHVDDLEKAREKAAQEAKAAFEAEGKE.

It belongs to the RNA polymerase beta chain family. The RNAP catalytic core consists of 2 alpha, 1 beta, 1 beta' and 1 omega subunit. When a sigma factor is associated with the core the holoenzyme is formed, which can initiate transcription.

It carries out the reaction RNA(n) + a ribonucleoside 5'-triphosphate = RNA(n+1) + diphosphate. DNA-dependent RNA polymerase catalyzes the transcription of DNA into RNA using the four ribonucleoside triphosphates as substrates. The protein is DNA-directed RNA polymerase subunit beta of Streptococcus gordonii (strain Challis / ATCC 35105 / BCRC 15272 / CH1 / DL1 / V288).